The following is a 304-amino-acid chain: N-acetylmuramic acid 6-phosphate etherase (304 aa).

An SIS domain is found at 62-225 (IVEAFQQGGR…TTASMILIGK (164 aa)). Residue Glu-90 is the Proton donor of the active site. Glu-121 is a catalytic residue.

This sequence belongs to the GCKR-like family. MurNAc-6-P etherase subfamily. In terms of assembly, homodimer.

It catalyses the reaction N-acetyl-D-muramate 6-phosphate + H2O = N-acetyl-D-glucosamine 6-phosphate + (R)-lactate. It participates in amino-sugar metabolism; 1,6-anhydro-N-acetylmuramate degradation. It functions in the pathway amino-sugar metabolism; N-acetylmuramate degradation. Its pathway is cell wall biogenesis; peptidoglycan recycling. Specifically catalyzes the cleavage of the D-lactyl ether substituent of MurNAc 6-phosphate, producing GlcNAc 6-phosphate and D-lactate. Together with AnmK, is also required for the utilization of anhydro-N-acetylmuramic acid (anhMurNAc) either imported from the medium or derived from its own cell wall murein, and thus plays a role in cell wall recycling. This chain is N-acetylmuramic acid 6-phosphate etherase, found in Glaesserella parasuis serovar 5 (strain SH0165) (Haemophilus parasuis).